The primary structure comprises 423 residues: COP9 signalosome complex subunit 3 (423 aa).

The 169-residue stretch at 197-365 (NFERAMYFYE…GMVCFHDSPE (169 aa)) folds into the PCI domain. Residues 401–410 (PQFVQKSMGS) are compositionally biased toward polar residues. The disordered stretch occupies residues 401–423 (PQFVQKSMGSQEDDSGSKPSSYS).

It belongs to the CSN3 family. As to quaternary structure, component of the CSN complex, probably composed of cops1, cops2, cops3, cops4, cops5, cops6, cops7, cops8 and cops9.

The protein resides in the cytoplasm. The protein localises to the nucleus. Component of the COP9 signalosome complex (CSN), a complex involved in various cellular and developmental processes. The CSN complex is an essential regulator of the ubiquitin (Ubl) conjugation pathway by mediating the deneddylation of the cullin subunits of E3 ligase complexes, leading to modify the Ubl ligase activity. In Xenopus laevis (African clawed frog), this protein is COP9 signalosome complex subunit 3 (cops3).